A 299-amino-acid chain; its full sequence is Acetylglutamate kinase (299 aa).

Substrate contacts are provided by residues 64–65 (GG), arginine 86, and asparagine 197.

It belongs to the acetylglutamate kinase family. ArgB subfamily.

It localises to the cytoplasm. It carries out the reaction N-acetyl-L-glutamate + ATP = N-acetyl-L-glutamyl 5-phosphate + ADP. It participates in amino-acid biosynthesis; L-arginine biosynthesis; N(2)-acetyl-L-ornithine from L-glutamate: step 2/4. Its function is as follows. Catalyzes the ATP-dependent phosphorylation of N-acetyl-L-glutamate. In Persephonella marina (strain DSM 14350 / EX-H1), this protein is Acetylglutamate kinase.